A 1187-amino-acid polypeptide reads, in one-letter code: DNA-directed RNA polymerase subunit beta (1187 aa).

The segment at Lys1150–Gln1187 is disordered. Residues Ala1173–Gln1187 are compositionally biased toward basic and acidic residues.

This sequence belongs to the RNA polymerase beta chain family. As to quaternary structure, the RNAP catalytic core consists of 2 alpha, 1 beta, 1 beta' and 1 omega subunit. When a sigma factor is associated with the core the holoenzyme is formed, which can initiate transcription.

The catalysed reaction is RNA(n) + a ribonucleoside 5'-triphosphate = RNA(n+1) + diphosphate. In terms of biological role, DNA-dependent RNA polymerase catalyzes the transcription of DNA into RNA using the four ribonucleoside triphosphates as substrates. This Bifidobacterium longum subsp. infantis (strain ATCC 15697 / DSM 20088 / JCM 1222 / NCTC 11817 / S12) protein is DNA-directed RNA polymerase subunit beta.